A 614-amino-acid chain; its full sequence is ATP-dependent zinc metalloprotease FtsH (614 aa).

Residues 1-7 (MKKQWKK) are Stromal-facing. A helical transmembrane segment spans residues 8-28 (IVLFVLPVIITLITLSSFLFY). The Lumenal segment spans residues 29-116 (NQDVVHNWSS…AHPSSSNVNL (88 aa)). A helical membrane pass occupies residues 117–137 (VSWLSNLLLPLILIITLFFFF). Over 138-614 (RRGNKSSSGP…EFMRIVEERV (477 aa)) the chain is Stromal. 211–218 (GPPGTGKT) is a binding site for ATP. Position 432 (histidine 432) interacts with Zn(2+). Glutamate 433 is a catalytic residue. Residues histidine 436 and aspartate 510 each coordinate Zn(2+).

This sequence in the central section; belongs to the AAA ATPase family. In the C-terminal section; belongs to the peptidase M41 family. In terms of assembly, homohexamer. The cofactor is Zn(2+).

It localises to the plastid. It is found in the chloroplast thylakoid membrane. Its function is as follows. Acts as a processive, ATP-dependent zinc metallopeptidase. The chain is ATP-dependent zinc metalloprotease FtsH from Cyanidium caldarium (Red alga).